The sequence spans 295 residues: Nitrogenase iron protein (295 aa).

10–17 contacts ATP; sequence GKGGIGKS. Residue C98 coordinates [4Fe-4S] cluster. Residue R101 is modified to ADP-ribosylarginine; by dinitrogenase reductase ADP-ribosyltransferase. C133 contributes to the [4Fe-4S] cluster binding site.

The protein belongs to the NifH/BchL/ChlL family. Homodimer. [4Fe-4S] cluster serves as cofactor. Post-translationally, the reversible ADP-ribosylation of Arg-101 inactivates the nitrogenase reductase and regulates nitrogenase activity.

The catalysed reaction is N2 + 8 reduced [2Fe-2S]-[ferredoxin] + 16 ATP + 16 H2O = H2 + 8 oxidized [2Fe-2S]-[ferredoxin] + 2 NH4(+) + 16 ADP + 16 phosphate + 6 H(+). The key enzymatic reactions in nitrogen fixation are catalyzed by the nitrogenase complex, which has 2 components: the iron protein and the molybdenum-iron protein. The chain is Nitrogenase iron protein from Tolumonas auensis (strain DSM 9187 / NBRC 110442 / TA 4).